A 565-amino-acid polypeptide reads, in one-letter code: Histone acetyltransferase ESA1 (565 aa).

Residues 1–33 (MAPRTQKSTSGTPGGSGTPGPDEGPQISPGGTY) are disordered. One can recognise a Tudor-knot domain in the interval 38-117 (VVVGCKAFVQ…DEWVSGTRLI (80 aa)). The tract at residues 173 to 217 (AQAAKNVQGESGLETPQKRKADSGDTSTAQSIRADSIDADADGED) is disordered. Positions 284–553 (ARVKNLNKIQ…INPQKLHWTA (270 aa)) constitute an MYST-type HAT domain. The C2HC MYST-type zinc-finger motif lies at 317–342 (LYICEMCLSYFPSPFTLKRHRSKCTL). Residues 367 to 388 (RTWCRNLCLLSKCFLDHKTLYY) carry the ESA1-RPD3 motif motif. N6-acetyllysine; by autocatalysis is present on Lys-384. Residues 425–429 (ACILT) and 434–440 (QRAGYGK) each bind acetyl-CoA. The active-site Proton donor/acceptor is Glu-460. Residue Ser-464 participates in acetyl-CoA binding.

This sequence belongs to the MYST (SAS/MOZ) family. As to quaternary structure, component of the NuA4 histone acetyltransferase complex. In terms of processing, autoacetylation at Lys-384 is required for proper function.

The protein resides in the nucleus. Its subcellular location is the chromosome. It catalyses the reaction L-lysyl-[histone] + acetyl-CoA = N(6)-acetyl-L-lysyl-[histone] + CoA + H(+). The catalysed reaction is L-lysyl-[protein] + acetyl-CoA = N(6)-acetyl-L-lysyl-[protein] + CoA + H(+). It carries out the reaction 2-hydroxyisobutanoyl-CoA + L-lysyl-[protein] = N(6)-(2-hydroxyisobutanoyl)-L-lysyl-[protein] + CoA + H(+). The enzyme catalyses (2E)-butenoyl-CoA + L-lysyl-[protein] = N(6)-(2E)-butenoyl-L-lysyl-[protein] + CoA + H(+). Its function is as follows. Catalytic component of the NuA4 histone acetyltransferase (HAT) complex which is involved in epigenetic transcriptional activation of selected genes principally by acetylation of nucleosomal histones H4, H3, H2B, H2A and H2A variant H2A.Z. Acetylates histone H4 to form H4K5ac, H4K8ac, H4K12ac and H4K16ac, histone H3 to form H3K14ac, and histone H2A to form H2AK4ac and H2AK7ac. The NuA4 complex is involved in the DNA damage response and is required for chromosome segregation. The NuA4 complex plays a direct role in repair of DNA double-strand breaks (DSBs) through homologous recombination. Recruitment to promoters depends on H3K4me. Also acetylates non-histone proteins. In addition to protein acetyltransferase, can use different acyl-CoA substrates, such as 2-hydroxyisobutanoyl-CoA (2-hydroxyisobutyryl-CoA) or (2E)-butenoyl-CoA (crotonyl-CoA), and is able to mediate protein 2-hydroxyisobutyrylation and crotonylation, respectively. In Mycosarcoma maydis (Corn smut fungus), this protein is Histone acetyltransferase ESA1 (ESA1).